Consider the following 1162-residue polypeptide: MGKRFTEYSQFDLSQVNKDVLKKWDENQVFAKSMTERDGCPSFVFFEGPPSANGMPGIHHVMARTIKDIFCRYKTMKGYQVKRKAGWDTHGLPVELSVEKALGITKEDIGKKISVADYNAACRKDVMKYTKEWEDLTHQMGYWVDMKHPYITYDNRYIETLWWLLKQLHKKGLLYKGYTIQPYSPAAGTGLSSHELNQPGCYRDVKDTTAVAQFKMKNPKPEMAEWGTPYFLAWTTTPWTLPSNTALCVGPKIDYVAVQTYNAYTGEPITVVLAKALLNTHFNSKAADLKLEDYKAGDKLVPFKVVAEYKGADLIGMEYEQLIPWVKPVEVSEDGTWKVSGKGFRVIPGDYVTTEDGTGIVHIAPTFGADDANVARAAGIPSLFMINKKGETRPMVDLTGKFYMLDELDENFVKECVDVDKYKEYQGAWVKNAYNPVFMVDGKYDEKAAQAAESLDVALCMMMKANNQAFKIEKHIHNYPHCWRTDKPVLYYPLDSWFIRSTACKERMMELNKTINWKPESTGTGRFGKWLENLNDWNLSRSRYWGTPLPIWRTEDGTSEICIESVEELYNEIEKSVAAGFMKSNPYKDKGFVPGEYTEGNYDKIDLHRPYVDDIILVSEDGQPMKRESDLIDVWFDSGAMPYAQIHYPFENKNILDNREVYPADFIAEGVDQTRGWFFTLHAIATMVFDSVSYKAVISNGLVLDKNGNKMSKRLNNAVDPFTTIEKYGSDPLRWYMITNSSPWDNLKFDIDGIEEVRRKFFGTLYNTYSFFALYANVDGFEYKEADVPMAERPEIDRWILSVLNTLIKEVDTCYNEYEPTKAGRLISDFVNDNLSNWYVRLNRKRFWGGEFTQDKLSAYQTLYTCLETVAKLMAPISPFYADRLYTDLTTATGRDNVVSIHLAEFPKYQEEMIDKELEARMQMAQDVTSMVLALRRKVNIKVRQPLQCIMIPVADEEQKAHIEAVKALIMNEVNVKDIKFVDGAAGVLVKKVKCDFKKLGPKFGKQMKAVAAAVAEMSQEAIAELEKNGKYALNLDGAEAVIEAADVEIFSEDIPGWLVANEGKLTVALEVTVTEELRREGIARELVNRIQNIRKSSGFEITDKIKITISKNTQTDDAVNEYNTYICNQVLGTSLDLADEVKDGTELNFDDFSLFVNVIKD.

The short motif at 50–60 is the 'HIGH' region element; it reads PSANGMPGIHH. Residues 710–714 carry the 'KMSKS' region motif; the sequence is KMSKR. K713 serves as a coordination point for ATP.

Belongs to the class-I aminoacyl-tRNA synthetase family. IleS type 2 subfamily. Monomer. It depends on Zn(2+) as a cofactor.

It localises to the cytoplasm. The catalysed reaction is tRNA(Ile) + L-isoleucine + ATP = L-isoleucyl-tRNA(Ile) + AMP + diphosphate. In terms of biological role, catalyzes the attachment of isoleucine to tRNA(Ile). As IleRS can inadvertently accommodate and process structurally similar amino acids such as valine, to avoid such errors it has two additional distinct tRNA(Ile)-dependent editing activities. One activity is designated as 'pretransfer' editing and involves the hydrolysis of activated Val-AMP. The other activity is designated 'posttransfer' editing and involves deacylation of mischarged Val-tRNA(Ile). In Bacteroides thetaiotaomicron (strain ATCC 29148 / DSM 2079 / JCM 5827 / CCUG 10774 / NCTC 10582 / VPI-5482 / E50), this protein is Isoleucine--tRNA ligase.